A 540-amino-acid polypeptide reads, in one-letter code: Chaperonin GroEL (540 aa).

ATP contacts are provided by residues 30–33, 87–91, G415, and D496; these read TLGP and DGTTT.

The protein belongs to the chaperonin (HSP60) family. As to quaternary structure, forms a cylinder of 14 subunits composed of two heptameric rings stacked back-to-back. Interacts with the co-chaperonin GroES.

Its subcellular location is the cytoplasm. The catalysed reaction is ATP + H2O + a folded polypeptide = ADP + phosphate + an unfolded polypeptide.. In terms of biological role, together with its co-chaperonin GroES, plays an essential role in assisting protein folding. The GroEL-GroES system forms a nano-cage that allows encapsulation of the non-native substrate proteins and provides a physical environment optimized to promote and accelerate protein folding. This Symbiobacterium thermophilum (strain DSM 24528 / JCM 14929 / IAM 14863 / T) protein is Chaperonin GroEL.